The following is a 266-amino-acid chain: Integral membrane protein 2B (266 aa).

At 1 to 54 (MVKVTFNSALAQKEAKKDEPKSSEEALIAPPDAVAVDCKDPDDVVPVGQRRAWC) the chain is on the cytoplasmic side. The helical; Signal-anchor for type II membrane protein transmembrane segment at 55–75 (WCMCFGLAFMLAGVILGGAYL) threads the bilayer. Topologically, residues 76 to 266 (YKYFALQPDD…KFAVETLICS (191 aa)) are lumenal. Positions 102-134 (EPSADAPAARYQTIEENIKIFEEDAVEFISVPV) are necessary for interaction with APP and inhibitor effects on APP processing. Positions 137-231 (FADSDPANIV…LCHDKETYKL (95 aa)) constitute a BRICHOS domain. 2 disulfides stabilise this stretch: cysteine 164-cysteine 223 and cysteine 248-cysteine 265. Residue asparagine 170 is glycosylated (N-linked (GlcNAc...) asparagine).

It belongs to the ITM2 family. As to quaternary structure, homodimer; disulfide-linked. Interacts with SPPL2A and SPPL2B. Interacts with APP. Mature BRI2 (mBRI2) interacts with the APP amyloid-beta A4 protein; the interaction occurs at the cell surface and in the endocytic compartments and enable alpha- and beta-secretase-induced APP cleavage inhibition. Mature BRI2 (mBRI2) interacts with the APP C99; the interaction occurs in the endocytic compartments and enable gamma-secretase-induced C99 cleavage inhibition. May form heterodimers with Bri23 peptide and APP amyloid-beta protein 40. Interacts with ADAM7 in sperm; the interaction increases following capacitation. In terms of processing, the ectodomain C-terminal part of the imBRI2 is processed by furin producing a secreted Bri23 peptide and a mature BRI2, membrane form (mBRI2). The remaining part of the ectodomain of mBRI2 containing the BRICHOS domain is cleaved by ADAM10 and is secreted (BRI2C, soluble form). The membrane-bound N-terminal fragment (BRI2C, membrane form) is further proteolytically processed by SPPL2A and SPPL2B through regulated intramembrane proteolysis producing a secreted C-peptide and a BRI2 intracellular domain (BRI2 ICD) released in the cytosol. Shedding by ADAM10 facilitates intramembrane cleavage but is not absolutely required for BRI2 ICD generation. Glycosylation at Asn-170 is important for cell surface localization, but doesn't affect furin- and ADAM10-induced proteolytic processing.

The protein localises to the golgi apparatus membrane. It localises to the cell membrane. The protein resides in the endosome membrane. Its subcellular location is the secreted. Functionally, plays a regulatory role in the processing of the amyloid-beta A4 precursor protein (APP) and acts as an inhibitor of the amyloid-beta peptide aggregation and fibrils deposition. Plays a role in the induction of neurite outgrowth. Functions as a protease inhibitor by blocking access of secretases to APP cleavage sites. Mature BRI2 (mBRI2) functions as a modulator of the amyloid-beta A4 precursor protein (APP) processing leading to a strong reduction in the secretion of secretase-processed amyloid-beta protein 40 and amyloid-beta protein 42. In terms of biological role, bri23 peptide prevents aggregation of APP amyloid-beta protein 42 into toxic oligomers. The polypeptide is Integral membrane protein 2B (Itm2b) (Rattus norvegicus (Rat)).